The primary structure comprises 313 residues: Ribonuclease Z (313 aa).

Zn(2+) contacts are provided by His-62, His-64, Asp-66, His-67, His-142, Asp-212, and His-270. The active-site Proton acceptor is Asp-66.

Belongs to the RNase Z family. As to quaternary structure, homodimer. The cofactor is Zn(2+).

The catalysed reaction is Endonucleolytic cleavage of RNA, removing extra 3' nucleotides from tRNA precursor, generating 3' termini of tRNAs. A 3'-hydroxy group is left at the tRNA terminus and a 5'-phosphoryl group is left at the trailer molecule.. Its function is as follows. Zinc phosphodiesterase, which displays some tRNA 3'-processing endonuclease activity. Probably involved in tRNA maturation, by removing a 3'-trailer from precursor tRNA. The protein is Ribonuclease Z of Cytophaga hutchinsonii (strain ATCC 33406 / DSM 1761 / CIP 103989 / NBRC 15051 / NCIMB 9469 / D465).